A 70-amino-acid chain; its full sequence is Putative RNA-binding protein YbcJ (70 aa).

Residues 12 to 68 enclose the S4 RNA-binding domain; sequence VELCDLLKLEGWSESGAQAKIAIAEGQVKVDGAVETRKRCKIVAGQTVSFAGHSVQV.

As to quaternary structure, in pull-down experiments interacts with CedA.

Functionally, its structure and the presence of conserved basic residues indicates that it probably binds RNA. This Escherichia coli (strain K12) protein is Putative RNA-binding protein YbcJ (ybcJ).